The primary structure comprises 271 residues: Formamidopyrimidine-DNA glycosylase (271 aa).

The active-site Schiff-base intermediate with DNA is proline 2. The active-site Proton donor is the glutamate 3. Lysine 57 acts as the Proton donor; for beta-elimination activity in catalysis. Positions 90, 109, and 151 each coordinate DNA. The segment at 236–270 adopts an FPG-type zinc-finger fold; that stretch reads HVYGRGSKSCTHCGNLLSEIRLGQRTTVFCGLCQT. The active-site Proton donor; for delta-elimination activity is arginine 260.

Belongs to the FPG family. As to quaternary structure, monomer. Requires Zn(2+) as cofactor.

It carries out the reaction Hydrolysis of DNA containing ring-opened 7-methylguanine residues, releasing 2,6-diamino-4-hydroxy-5-(N-methyl)formamidopyrimidine.. It catalyses the reaction 2'-deoxyribonucleotide-(2'-deoxyribose 5'-phosphate)-2'-deoxyribonucleotide-DNA = a 3'-end 2'-deoxyribonucleotide-(2,3-dehydro-2,3-deoxyribose 5'-phosphate)-DNA + a 5'-end 5'-phospho-2'-deoxyribonucleoside-DNA + H(+). In terms of biological role, involved in base excision repair of DNA damaged by oxidation or by mutagenic agents. Acts as a DNA glycosylase that recognizes and removes damaged bases. Has a preference for oxidized purines, such as 7,8-dihydro-8-oxoguanine (8-oxoG). Has AP (apurinic/apyrimidinic) lyase activity and introduces nicks in the DNA strand. Cleaves the DNA backbone by beta-delta elimination to generate a single-strand break at the site of the removed base with both 3'- and 5'-phosphates. This is Formamidopyrimidine-DNA glycosylase from Shewanella denitrificans (strain OS217 / ATCC BAA-1090 / DSM 15013).